The sequence spans 638 residues: Threonine--tRNA ligase (638 aa).

The 61-residue stretch at 1-61 folds into the TGS domain; it reads MVAITLPDGK…DRDVNLSIIT (61 aa). The segment at 244–536 is catalytic; the sequence is DHRRLGREME…LIENFAGRFP (293 aa). The Zn(2+) site is built by Cys-336, His-387, and His-513.

It belongs to the class-II aminoacyl-tRNA synthetase family. In terms of assembly, homodimer. It depends on Zn(2+) as a cofactor.

It localises to the cytoplasm. The enzyme catalyses tRNA(Thr) + L-threonine + ATP = L-threonyl-tRNA(Thr) + AMP + diphosphate + H(+). Catalyzes the attachment of threonine to tRNA(Thr) in a two-step reaction: L-threonine is first activated by ATP to form Thr-AMP and then transferred to the acceptor end of tRNA(Thr). Also edits incorrectly charged L-seryl-tRNA(Thr). The protein is Threonine--tRNA ligase of Paramagnetospirillum magneticum (strain ATCC 700264 / AMB-1) (Magnetospirillum magneticum).